The sequence spans 349 residues: Probable esterase Cgl0839 (349 aa).

The AB hydrolase-1 domain occupies 60–329; sequence GTHQTWFQQY…EDIAGHLGLF (270 aa). Ser142 acts as the Nucleophile in catalysis. Active-site residues include Asp296 and His325.

The protein belongs to the AB hydrolase superfamily. Acetyl esterase family. In terms of assembly, homodimer.

Functionally, esterase that catalyzes the hydrolysis of 4-nitrophenyl acetate in vitro. The polypeptide is Probable esterase Cgl0839 (Corynebacterium glutamicum (strain ATCC 13032 / DSM 20300 / JCM 1318 / BCRC 11384 / CCUG 27702 / LMG 3730 / NBRC 12168 / NCIMB 10025 / NRRL B-2784 / 534)).